A 392-amino-acid chain; its full sequence is Extracellular metalloproteinase 4 (392 aa).

The propeptide occupies 1-9 (VHSVVDYVS). A glycan (N-linked (GlcNAc...) asparagine) is linked at asparagine 176. Histidine 193 provides a ligand contact to Zn(2+). Glutamate 194 is an active-site residue. Zn(2+) is bound at residue histidine 197. Asparagine 359 and asparagine 385 each carry an N-linked (GlcNAc...) asparagine glycan.

The protein belongs to the peptidase M36 family. Zn(2+) serves as cofactor.

The protein resides in the secreted. Functionally, secreted metalloproteinase probably acting as a virulence factor. The protein is Extracellular metalloproteinase 4 (MEP4) of Trichophyton soudanense.